The chain runs to 456 residues: F-box/FBD/LRR-repeat protein At3g52680 (456 aa).

Positions 20–73 (KDRISELPDGLLLKILSSLPTNIVVATSVLSKQWRSLWKLVPNLEFDSDDYESE) constitute an F-box domain. LRR repeat units lie at residues 74 to 100 (HYTFSEIVCKSFLSHKAPVLESFRLKF), 102 to 127 (NFNPVDIGLWVGIAFSRHLRELVLDF), 152 to 179 (TLKLVLCILVDIPSPVLMKSLRTLHLEF), 180 to 205 (VRYKDESSVRNLLSGCPGLEELRLYR), 225 to 252 (TIHDNNDGPEFWGYVINAPFLKYLLIEE), 270 to 295 (IAEVTSITIEKFLGSFTSVSRLLLNL), and 318 to 344 (TREAEWWNLLTLMLENSPKLQVLKLTD). In terms of domain architecture, FBD spans 358 to 409 (KWNEPKDVPECLLSQLETFVWRRFDWGREEEKEIATYILKNGRRLKKATFST).

This Arabidopsis thaliana (Mouse-ear cress) protein is F-box/FBD/LRR-repeat protein At3g52680.